The primary structure comprises 1527 residues: ATP-binding cassette sub-family C member 3 (1527 aa).

Topologically, residues 1–32 (MDALCGSGELGSKFWDSNLSVHTENPDLTPCF) are extracellular. A glycan (N-linked (GlcNAc...) asparagine) is linked at N18. The chain crosses the membrane as a helical span at residues 33 to 53 (QNSLLAWVPCIYLWVALPCYL). The Cytoplasmic portion of the chain corresponds to 54 to 73 (LYLRHHCRGYIILSHLSKLK). Residues 74 to 94 (MVLGVLLWCVSWADLFYSFHG) traverse the membrane as a helical segment. At 95-99 (LVHGR) the chain is on the extracellular side. Residues 100 to 120 (APAPVFFVTPLVVGVTMLLAT) form a helical membrane-spanning segment. The Cytoplasmic portion of the chain corresponds to 121–132 (LLIQYERLQGVQ). A helical membrane pass occupies residues 133 to 153 (SSGVLIIFWFLCVVCAIVPFR). At 154 to 171 (SKILLAKAEGEISDPFRF) the chain is on the extracellular side. The helical transmembrane segment at 172-192 (TTFYIHFALVLSALILACFRE) threads the bilayer. Residues 193-302 (KPPFFSAKNV…RPRKPSFLKA (110 aa)) lie on the Cytoplasmic side of the membrane. The chain crosses the membrane as a helical span at residues 303-323 (LLATFGSSFLISACFKLIQDL). The ABC transmembrane type-1 1 domain maps to 311 to 594 (FLISACFKLI…LPQLISNLTQ (284 aa)). Residues 324–349 (LSFINPQLLSILIRFISNPMAPSWWG) lie on the Extracellular side of the membrane. The helical transmembrane segment at 350–370 (FLVAGLMFLCSMMQSLILQHY) threads the bilayer. Over 371 to 426 (YHYIFVTGVKFRTGIMGVIYRKALVITNSVKRASTVGEIVNLMSVDAQRFMDLAPF) the chain is Cytoplasmic. The chain crosses the membrane as a helical span at residues 427-447 (LNLLWSAPLQIILAIYFLWQN). Residues 448–450 (LGP) lie on the Extracellular side of the membrane. Residues 451 to 471 (SVLAGVAFMVLLIPLNGAVAV) traverse the membrane as a helical segment. Topologically, residues 472–533 (KMRAFQVKQM…LLRTAAYLHT (62 aa)) are cytoplasmic. The chain crosses the membrane as a helical span at residues 534 to 554 (TTTFTWMCSPFLVTLITLWVY). At 555 to 576 (VYVDPNNVLDAEKAFVSVSLFN) the chain is on the extracellular side. A helical membrane pass occupies residues 577-597 (ILRLPLNMLPQLISNLTQASV). Residues 598 to 963 (SLKRIQQFLS…VELSVFWDYA (366 aa)) are Cytoplasmic-facing. The region spanning 629–851 (IHSGTFTWAQ…NGSFANFLCN (223 aa)) is the ABC transporter 1 domain. Position 661–668 (661–668 (GPVGCGKS)) interacts with ATP. Residues S908 and S911 each carry the phosphoserine modification. The segment at 910–932 (LSSDGEGQGRPVPRRHLGPSEKV) is disordered. A helical transmembrane segment spans residues 964-984 (KAVGLCTTLAICLLYVGQSAA). The region spanning 971–1252 (TLAICLLYVG…MIRMMSDLES (282 aa)) is the ABC transmembrane type-1 2 domain. The Extracellular segment spans residues 985–1021 (AIGANVWLSAWTNDAMADSRQNNTSLRLGVYAALGIL). Residues N1006 and N1007 are each glycosylated (N-linked (GlcNAc...) asparagine). The helical transmembrane segment at 1022-1042 (QGFLVMLAAMAMAAGGIQAAR) threads the bilayer. Residues 1043–1085 (VLHQALLHNKIRSPQSFFDTTPSGRILNCFSKDIYVVDEVLAP) are Cytoplasmic-facing. A helical transmembrane segment spans residues 1086 to 1106 (VILMLLNSFFNAISTLVVIMA). A topological domain (extracellular) is located at residue S1107. The helical transmembrane segment at 1108-1128 (TPLFTVVILPLAVLYTLVQRF) threads the bilayer. Topologically, residues 1129-1199 (YAATSRQLKR…ISNRWLSIGV (71 aa)) are cytoplasmic. A helical transmembrane segment spans residues 1200–1220 (EFVGNCVVLFAALFAVIGRSS). The Extracellular segment spans residues 1221–1222 (LN). The chain crosses the membrane as a helical span at residues 1223-1243 (PGLVGLSVSYSLQVTFALNWM). Topologically, residues 1244–1527 (IRMMSDLESN…YGMARDAGLA (284 aa)) are cytoplasmic. The 233-residue stretch at 1291 to 1523 (FRNYSVRYRP…RGIFYGMARD (233 aa)) folds into the ABC transporter 2 domain. 1323–1330 (GRTGAGKS) is a binding site for ATP.

It belongs to the ABC transporter superfamily. ABCC family. Conjugate transporter (TC 3.A.1.208) subfamily. Mainly expressed in the liver. Also expressed in small intestine, colon, prostate, testis, brain and at a lower level in the kidney. In testis, localized to peritubular myoid cells, Leydig cells, along the basal membrane of Sertoli cells and moderately in the adluminal compartment of the seminiferous tubules.

The protein resides in the basolateral cell membrane. The protein localises to the basal cell membrane. It catalyses the reaction taurocholate(in) + ATP + H2O = taurocholate(out) + ADP + phosphate + H(+). The catalysed reaction is glycocholate(in) + ATP + H2O = glycocholate(out) + ADP + phosphate + H(+). It carries out the reaction taurolithocholate 3-sulfate(in) + ATP + H2O = taurolithocholate 3-sulfate(out) + ADP + phosphate + H(+). The enzyme catalyses taurochenodeoxycholate 3-sulfate(in) + ATP + H2O = taurochenodeoxycholate 3-sulfate(out) + ADP + phosphate + H(+). It catalyses the reaction an S-substituted glutathione(in) + ATP + H2O = an S-substituted glutathione(out) + ADP + phosphate + H(+). The catalysed reaction is ATP + H2O + xenobioticSide 1 = ADP + phosphate + xenobioticSide 2.. It carries out the reaction 17beta-estradiol 17-O-(beta-D-glucuronate)(in) + ATP + H2O = 17beta-estradiol 17-O-(beta-D-glucuronate)(out) + ADP + phosphate + H(+). The enzyme catalyses dehydroepiandrosterone 3-sulfate(in) + ATP + H2O = dehydroepiandrosterone 3-sulfate(out) + ADP + phosphate + H(+). It catalyses the reaction leukotriene C4(in) + ATP + H2O = leukotriene C4(out) + ADP + phosphate + H(+). The catalysed reaction is (4Z,15Z)-bilirubin IXalpha C8-beta-D-glucuronoside(in) + ATP + H2O = (4Z,15Z)-bilirubin IXalpha C8-beta-D-glucuronoside(out) + ADP + phosphate + H(+). It carries out the reaction (4Z,15Z)-bilirubin IXalpha C8,C12-beta-D-bisglucuronoside(in) + ATP + H2O = (4Z,15Z)-bilirubin IXalpha C8,C12-beta-D-bisglucuronoside(out) + ADP + phosphate + H(+). In terms of biological role, ATP-dependent transporter of the ATP-binding cassette (ABC) family that binds and hydrolyzes ATP to enable active transport of various substrates including many drugs, toxicants and endogenous compound across cell membranes. Transports glucuronide conjugates such as bilirubin diglucuronide, estradiol-17-beta-o-glucuronide and GSH conjugates such as leukotriene C4 (LTC4). Transports also various bile salts (taurocholate, glycocholate, taurochenodeoxycholate-3-sulfate, taurolithocholate- 3-sulfate). Does not contribute substantially to bile salt physiology but provides an alternative route for the export of bile acids and glucuronides from cholestatic hepatocytes. May contribute to regulate the transport of organic compounds in testes across the blood-testis-barrier. Can confer resistance to various anticancer drugs, methotrexate, tenoposide and etoposide, by decreasing accumulation of these drugs in cells. This is ATP-binding cassette sub-family C member 3 from Homo sapiens (Human).